We begin with the raw amino-acid sequence, 485 residues long: Chitin synthase regulator 2 (485 aa).

Sel1-like repeat units follow at residues 164-202 (PDAQYFLADCYANGIGTARGKQDFDRAFPLFILAAKHGH), 203-238 (PDACYRAGTCCEHGWGCRRDSAKAVSFYKKAAVGLH), 239-275 (PGAMYRLGTAELNGALGFPRRPKEGVKWLKRSAEHAT), 279-316 (PHALHELALLHERGIENVVFVDNDYAAELLAQSAELGY), 317-353 (APSAFKLGECYEYGKMGCPVDPALSIHYYNISAQQDH), 354-391 (KDACFALTAWYLVGSPGVLPQSDTEAYLWAKKAAELGL), and 392-427 (AKAQYAVGYFTETGIGIEANPQAALTWYKQAAEGGD). The segment at 460–485 (AANLAQRSGSGSGASGKDGKDGCLIM) is disordered. Positions 476–485 (KDGKDGCLIM) are enriched in basic and acidic residues. At Cys-482 the chain carries Cysteine methyl ester. The S-farnesyl cysteine moiety is linked to residue Cys-482. A propeptide spans 483–485 (LIM) (removed in mature form).

The protein belongs to the SKT5 family.

It is found in the cell membrane. In terms of biological role, activator of the chitin synthase CHS3 which polymerizes chitin, a structural polymer of the fungal cell wall. Chitin produced by CHS3 is deacetylated to chitosan, which helps to maintain cell wall integrity, anchor melanin, and offers an advantage during infection, as chitosan is less readily detected by host immunosurveillance. The chain is Chitin synthase regulator 2 from Cryptococcus neoformans var. grubii serotype A (strain H99 / ATCC 208821 / CBS 10515 / FGSC 9487) (Filobasidiella neoformans var. grubii).